Reading from the N-terminus, the 237-residue chain is Sugar fermentation stimulation protein homolog (237 aa).

It belongs to the SfsA family.

This is Sugar fermentation stimulation protein homolog from Methylobacterium radiotolerans (strain ATCC 27329 / DSM 1819 / JCM 2831 / NBRC 15690 / NCIMB 10815 / 0-1).